A 228-amino-acid polypeptide reads, in one-letter code: Non-specific lipid-transfer protein EPAD1 (228 aa).

The first 24 residues, 1 to 24 (MERSHLAVLLGLLAFAAGVPAAAA), serve as a signal peptide directing secretion. Disulfide bonds link Cys40/Cys62, Cys63/Cys105, and Cys78/Cys119. The N-linked (GlcNAc...) asparagine glycan is linked to Asn94. The disordered stretch occupies residues 124–207 (PPASIVTAPP…PPRSGASSSL (84 aa)). A compositionally biased stretch (pro residues) spans 145–162 (REAPPPPPAAEKLSPPPQ).

Belongs to the plant LTP family. As to expression, expressed in young panicles. Specifically expressed in pollen mother cells and young microspores.

The protein localises to the cell membrane. Its function is as follows. Plant non-specific lipid-transfer protein that binds phospholipids in vitro. Required for correct pollen exine patterning by controlling the continuity and homogeneity of the primexine distribution. The protein is Non-specific lipid-transfer protein EPAD1 of Oryza sativa subsp. japonica (Rice).